The chain runs to 638 residues: Epithelial sodium channel subunit delta (638 aa).

Residues 1-13 (MAEHRSMDGRMEA) show a composition bias toward basic and acidic residues. Residues 1–47 (MAEHRSMDGRMEAATRGGSHLQAAAQTPPRPGPPSAPPPPPKEGHQE) form a disordered region. Residues 1–86 (MAEHRSMDGR…CSRGNRLKTT (86 aa)) are Cytoplasmic-facing. Positions 28 to 41 (PPRPGPPSAPPPPP) are enriched in pro residues. The chain crosses the membrane as a helical span at residues 87-107 (SWGLLSLGALVALCWQLGLLF). Over 108 to 530 (ERHWHRPVLM…VPQLLSAMGS (423 aa)) the chain is Extracellular. 2 N-linked (GlcNAc...) asparagine glycosylation sites follow: N166 and N384. A helical membrane pass occupies residues 531–551 (LCSLWFGASVLSLLELLELLL). Over 552-638 (DASALTLVLG…GPQPLETLDT (87 aa)) the chain is Cytoplasmic. The disordered stretch occupies residues 574 to 613 (RASPASGASSIKPEASQMPTPAGGTSDDPEPSGPHLPRVM).

Belongs to the amiloride-sensitive sodium channel (TC 1.A.6) family. SCNN1D subfamily. As to quaternary structure, can form an alternative heterotrimeric epithelial sodium channel (ENaC), composed of a delta (SCNN1D), beta (SCNN1B), and gamma (SCNN1G) subunit, where the delta (SCNN1D) subunit replaces the alpha (SCNN1A) subunit.

Its subcellular location is the apical cell membrane. The enzyme catalyses Na(+)(in) = Na(+)(out). Originally identified and characterized by its inhibition by the diuretic drug amiloride. In terms of biological role, potential alternative pore-forming subunit of the epithelial sodium channel (ENaC), capable of replacing the alpha/SCNN1A subunit, creating a more active channel with distinct properties. ENaC functions in epithelial tissues, where it facilitates the electrodiffusion of sodium ions from the extracellular fluid through the apical membrane of cells, with water following osmotically, regulating sodium balance and fluid homeostasis. This subunit could also function independently as a sodium channel or assemble into other tissue-specific heterotrimeric sodium channels. The protein is Epithelial sodium channel subunit delta of Pan troglodytes (Chimpanzee).